The chain runs to 742 residues: Feeding circuit activating peptides (742 aa).

The N-terminal stretch at 1 to 22 is a signal peptide; sequence MTFAASFRALLCVLFCAALVHC. The propeptide occupies 23 to 98; that stretch reads KTRTKRYVPH…YGALADRDVD (76 aa). Residues 117–131 constitute a propeptide, connecting peptide; it reads GSLDAIPQDTDASSD. Propeptides lie at residues 164-168, 202-220, 236-253, 271-275, 293-297, 315-321, 339-341, 359-366, 384-388, 406-410, 428-432, 450-454, 472-476, 494-498, 516-520, 538-542, 560-564, 582-592, 610-614, and 647-742; these read GSGAE, RGTG…PWGS, DTEL…TEVN, SGEAG, ADDQG, FDNSAGE, AGD, FDNDISGQ, SDQDN, ADDDG, ADEDD, GDEDD, SDEDD, NSPGL, NNEYYSGAENE, DQPGE, and NSAD…AGQM.

Expressed in pleural, pedal, abdominal, buccal and cerebral ganglia.

The protein localises to the secreted. Initiates organized rhythmic motor output of feeding circuit. This Aplysia californica (California sea hare) protein is Feeding circuit activating peptides.